The sequence spans 206 residues: Protein SUE1, mitochondrial (206 aa).

The transit peptide at methionine 1–histidine 24 directs the protein to the mitochondrion.

Its subcellular location is the mitochondrion envelope. Required for degradation of unstable forms of cytochrome c. This is Protein SUE1, mitochondrial from Saccharomyces cerevisiae (strain ATCC 204508 / S288c) (Baker's yeast).